The following is a 267-amino-acid chain: MATAHHTDQLHSLQTHGIHCGETTIPSQGDELPAYIAKPDQHTGPYPVVIVVQEIFGVHEHIQDICRRLAKQGYLAIAPELYFRQGDAKDYSNINELVNNLVKKVPDRQVLVDLDHTAHWASRHGGDTKKLAITGFCWGGRIAWLYAAHNPQLKAAVAWYGKLVGEKTLFLPKYPVDVAIDLCAPVLGLYGGKDTSIPAEHIETMRQALRAANADAEIIVYPEAGHAFNADYRPSYHAESAQDGWQRMLDWFTQHGVSAIPIPEETQ.

Active-site residues include Cys137, Asp194, and His226.

This sequence belongs to the dienelactone hydrolase family.

It carries out the reaction 2-(5-oxo-2,5-dihydrofuran-2-ylidene)acetate + H2O = 4-oxohex-2-enedioate + H(+). The polypeptide is Putative carboxymethylenebutenolidase (Yersinia pestis).